A 136-amino-acid chain; its full sequence is C-type natriuretic peptide prohormone (136 aa).

The signal sequence occupies residues 1-21; sequence MSGQTSFYCGLLLVLLIQAQA. An intrachain disulfide couples Cys-120 to Cys-136.

It belongs to the natriuretic peptide family. CNP-115 is differentially processed to produce CNP-38 and CNP-39 in the heart and CNP-22 in the brain.

It localises to the secreted. Hormone which may be vasoactive and natriuretic. Has a cGMP-stimulating activity. The polypeptide is C-type natriuretic peptide prohormone (Triakis scyllium (Banded houndshark)).